Consider the following 638-residue polypeptide: Leucine-rich repeat-containing protein 63 (638 aa).

2 disordered regions span residues 220-241 and 306-325; these read VPST…PSAA and TTAA…TVQR. LRR repeat units lie at residues 389-412, 413-435, 437-458, 460-481, 482-504, and 532-556; these read AFQL…ILYL, QNLQ…IHLL, YLRI…LFCL, YLEE…IQKL, RSLE…ILKL, and LTQI…VRKS.

This is Leucine-rich repeat-containing protein 63 from Mus musculus (Mouse).